A 571-amino-acid polypeptide reads, in one-letter code: Proline--tRNA ligase (571 aa).

Belongs to the class-II aminoacyl-tRNA synthetase family. ProS type 1 subfamily. Homodimer.

Its subcellular location is the cytoplasm. The catalysed reaction is tRNA(Pro) + L-proline + ATP = L-prolyl-tRNA(Pro) + AMP + diphosphate. Catalyzes the attachment of proline to tRNA(Pro) in a two-step reaction: proline is first activated by ATP to form Pro-AMP and then transferred to the acceptor end of tRNA(Pro). As ProRS can inadvertently accommodate and process non-cognate amino acids such as alanine and cysteine, to avoid such errors it has two additional distinct editing activities against alanine. One activity is designated as 'pretransfer' editing and involves the tRNA(Pro)-independent hydrolysis of activated Ala-AMP. The other activity is designated 'posttransfer' editing and involves deacylation of mischarged Ala-tRNA(Pro). The misacylated Cys-tRNA(Pro) is not edited by ProRS. The sequence is that of Proline--tRNA ligase from Actinobacillus succinogenes (strain ATCC 55618 / DSM 22257 / CCUG 43843 / 130Z).